Reading from the N-terminus, the 197-residue chain is Small ribosomal subunit protein uS4c (197 aa).

Positions 85 to 157 constitute an S4 RNA-binding domain; that stretch reads MRLDNILFRL…LQLFTGKELA (73 aa).

It belongs to the universal ribosomal protein uS4 family. In terms of assembly, part of the 30S ribosomal subunit. Contacts protein S5. The interaction surface between S4 and S5 is involved in control of translational fidelity.

Its subcellular location is the plastid. Functionally, one of the primary rRNA binding proteins, it binds directly to 16S rRNA where it nucleates assembly of the body of the 30S subunit. Its function is as follows. With S5 and S12 plays an important role in translational accuracy. This Cuscuta gronovii (Common dodder) protein is Small ribosomal subunit protein uS4c (rps4).